The chain runs to 84 residues: Small ribosomal subunit protein bS18 (84 aa).

The protein belongs to the bacterial ribosomal protein bS18 family. In terms of assembly, part of the 30S ribosomal subunit. Forms a tight heterodimer with protein bS6.

Functionally, binds as a heterodimer with protein bS6 to the central domain of the 16S rRNA, where it helps stabilize the platform of the 30S subunit. The sequence is that of Small ribosomal subunit protein bS18 from Vesicomyosocius okutanii subsp. Calyptogena okutanii (strain HA).